Consider the following 123-residue polypeptide: Late histone H2B.L3 (123 aa).

Positions 1 to 10 (MPAKAQAAGK) are enriched in low complexity. The disordered stretch occupies residues 1–32 (MPAKAQAAGKKGSKKAKAPKPSGDKKRRRKRK). Serine 110 is a glycosylation site (O-linked (GlcNAc) serine). Residue lysine 118 forms a Glycyl lysine isopeptide (Lys-Gly) (interchain with G-Cter in ubiquitin) linkage.

It belongs to the histone H2B family. In terms of assembly, the nucleosome is a histone octamer containing two molecules each of H2A, H2B, H3 and H4 assembled in one H3-H4 heterotetramer and two H2A-H2B heterodimers. The octamer wraps approximately 147 bp of DNA. Post-translationally, monoubiquitination of Lys-118 gives a specific tag for epigenetic transcriptional activation and is also prerequisite for histone H3 'Lys-4' and 'Lys-79' methylation. GlcNAcylation at Ser-110 promotes monoubiquitination of Lys-118. It fluctuates in response to extracellular glucose, and associates with transcribed genes.

Its subcellular location is the nucleus. It is found in the chromosome. Functionally, core component of nucleosome. Nucleosomes wrap and compact DNA into chromatin, limiting DNA accessibility to the cellular machineries which require DNA as a template. Histones thereby play a central role in transcription regulation, DNA repair, DNA replication and chromosomal stability. DNA accessibility is regulated via a complex set of post-translational modifications of histones, also called histone code, and nucleosome remodeling. In Strongylocentrotus purpuratus (Purple sea urchin), this protein is Late histone H2B.L3.